The primary structure comprises 298 residues: Max-like protein X (298 aa).

The segment at 1 to 63 (MTEPGASPED…ARGCREDSSH (63 aa)) is disordered. A Phosphoserine modification is found at serine 7. A compositionally biased stretch (basic residues) spans 28–37 (GRARARRGSG). A phosphoserine mark is found at serine 45, serine 48, serine 74, serine 77, and serine 98. The span at 98-109 (SIGSTSASSVPN) shows a compositional bias: polar residues. Residues 98-119 (SIGSTSASSVPNTDDEDSDYQQ) form a disordered region. Residues 129 to 187 (RRRRAHTQAEQKRRDAIKRGYDDLQTIVPTCQQQDFSIGSQKLSKAIVLQKTIDYIQFL) form the bHLH domain. The interval 194-214 (QEEEVSTLRKDVTALKIMKVN) is leucine-zipper.

As to quaternary structure, efficient DNA binding requires dimerization with another bHLH protein. Binds DNA as a heterodimer with MAD1, MAD4, MNT, WBSCR14 and MLXIP. Can also bind DNA as a homodimer. In terms of tissue distribution, expressed in all tissues examined: stomach, duodenum, jejunum, ileum, colon, liver, pancreas, salivary gland, kidney, spleen, lung, heart, skeletal muscle, brain, ovary and testis.

It localises to the cytoplasm. It is found in the nucleus. Transcription regulator. Forms a sequence-specific DNA-binding protein complex with MAD1, MAD4, MNT, WBSCR14 and MLXIP which recognizes the core sequence 5'-CACGTG-3'. The TCFL4-MAD1, TCFL4-MAD4, TCFL4-WBSCR14 complexes are transcriptional repressors. Plays a role in transcriptional activation of glycolytic target genes. Involved in glucose-responsive gene regulation. In Mus musculus (Mouse), this protein is Max-like protein X (Mlx).